The chain runs to 463 residues: ATP synthase subunit beta 1 (463 aa).

152–159 contacts ATP; that stretch reads GGAGVGKT.

Belongs to the ATPase alpha/beta chains family. F-type ATPases have 2 components, CF(1) - the catalytic core - and CF(0) - the membrane proton channel. CF(1) has five subunits: alpha(3), beta(3), gamma(1), delta(1), epsilon(1). CF(0) has three main subunits: a(1), b(2) and c(9-12). The alpha and beta chains form an alternating ring which encloses part of the gamma chain. CF(1) is attached to CF(0) by a central stalk formed by the gamma and epsilon chains, while a peripheral stalk is formed by the delta and b chains.

It is found in the cell inner membrane. The catalysed reaction is ATP + H2O + 4 H(+)(in) = ADP + phosphate + 5 H(+)(out). In terms of biological role, produces ATP from ADP in the presence of a proton gradient across the membrane. The catalytic sites are hosted primarily by the beta subunits. The sequence is that of ATP synthase subunit beta 1 from Shewanella frigidimarina (strain NCIMB 400).